Consider the following 342-residue polypeptide: Dihydroorotase (342 aa).

Zn(2+)-binding residues include His13 and His15. Residues 15–17 (HLR) and Asn41 contribute to the substrate site. Residues Lys98, His135, and His173 each contribute to the Zn(2+) site. Lys98 is modified (N6-carboxylysine). A substrate-binding site is contributed by His135. Leu218 provides a ligand contact to substrate. Asp246 contacts Zn(2+). Asp246 is an active-site residue. The substrate site is built by His250 and Ala262.

This sequence belongs to the metallo-dependent hydrolases superfamily. DHOase family. Class II DHOase subfamily. In terms of assembly, homodimer. Zn(2+) is required as a cofactor.

The enzyme catalyses (S)-dihydroorotate + H2O = N-carbamoyl-L-aspartate + H(+). Its pathway is pyrimidine metabolism; UMP biosynthesis via de novo pathway; (S)-dihydroorotate from bicarbonate: step 3/3. Its function is as follows. Catalyzes the reversible cyclization of carbamoyl aspartate to dihydroorotate. The sequence is that of Dihydroorotase from Vibrio campbellii (strain ATCC BAA-1116).